A 516-amino-acid polypeptide reads, in one-letter code: Apolipoprotein N-acyltransferase (516 aa).

Helical transmembrane passes span 24–44 (LAQAPFDLWPLALLSLALLYL), 58–78 (GWCYGFGLYAVGTSWIYISIH), 90–110 (LLTLALMLALAFFFALPAWLW), 125–145 (LAFAALWLALEGFRGWFLTGF), 163–183 (APLGGVWLLSFALALSAALLV), and 192–212 (PPALLGALVLLLAPWATGLAL). Positions 230 to 471 (VQGNVEQNLK…RAVLYGEVTP (242 aa)) constitute a CN hydrolase domain. The Proton acceptor role is filled by Glu-270. Lys-331 is an active-site residue. Cys-383 (nucleophile) is an active-site residue. Residues 479-499 (LRWRAWPLAGLAVLLLGWALL) form a helical membrane-spanning segment.

This sequence belongs to the CN hydrolase family. Apolipoprotein N-acyltransferase subfamily.

Its subcellular location is the cell inner membrane. It carries out the reaction N-terminal S-1,2-diacyl-sn-glyceryl-L-cysteinyl-[lipoprotein] + a glycerophospholipid = N-acyl-S-1,2-diacyl-sn-glyceryl-L-cysteinyl-[lipoprotein] + a 2-acyl-sn-glycero-3-phospholipid + H(+). It participates in protein modification; lipoprotein biosynthesis (N-acyl transfer). In terms of biological role, catalyzes the phospholipid dependent N-acylation of the N-terminal cysteine of apolipoprotein, the last step in lipoprotein maturation. The protein is Apolipoprotein N-acyltransferase of Azotobacter vinelandii (strain DJ / ATCC BAA-1303).